The chain runs to 648 residues: Serine/threonine-protein kinase DCLK3 (648 aa).

Disordered stretches follow at residues D86–V127 and Q150–M345. Composition is skewed to basic and acidic residues over residues G98–V127, E213–S234, E255–P266, L277–P303, and T312–S338. The Protein kinase domain occupies Y356–I613. ATP is bound by residues I362–V370 and K385. D477 serves as the catalytic Proton acceptor. The disordered stretch occupies residues V628 to S648.

This sequence belongs to the protein kinase superfamily. CAMK Ser/Thr protein kinase family. CaMK subfamily.

The protein localises to the cytoplasm. The protein resides in the nucleus. The catalysed reaction is L-seryl-[protein] + ATP = O-phospho-L-seryl-[protein] + ADP + H(+). It catalyses the reaction L-threonyl-[protein] + ATP = O-phospho-L-threonyl-[protein] + ADP + H(+). The chain is Serine/threonine-protein kinase DCLK3 (DCLK3) from Homo sapiens (Human).